A 162-amino-acid polypeptide reads, in one-letter code: Meiosis-specific protein HED1 (162 aa).

The interval Lys67–Leu124 is disordered. Positions Asp85–Asp94 are enriched in basic and acidic residues.

Interacts with RAD51.

It is found in the nucleus. The protein resides in the chromosome. Involved in regulation of meiotic recombination and repair of DNA damage. Inhibits RAD51-mediated recombination when the meiotic recombination machinery is impaired. The sequence is that of Meiosis-specific protein HED1 (HED1) from Saccharomyces cerevisiae (strain ATCC 204508 / S288c) (Baker's yeast).